Here is an 864-residue protein sequence, read N- to C-terminus: Putative Gly-rich membrane protein Bcell_0380 (864 aa).

Residues 7–27 traverse the membrane as a helical segment; the sequence is ITFLAAFICIIFVIYAIYHSV. The disordered stretch occupies residues 372-399; sequence TVENSFYDEDTTGQSDTGKGTPMSTADM. The span at 383 to 395 shows a compositional bias: polar residues; that stretch reads TGQSDTGKGTPMS.

The protein localises to the cell membrane. This is Putative Gly-rich membrane protein Bcell_0380 from Evansella cellulosilytica (strain ATCC 21833 / DSM 2522 / FERM P-1141 / JCM 9156 / N-4) (Bacillus cellulosilyticus).